We begin with the raw amino-acid sequence, 158 residues long: uncharacterized protein (158 aa).

Positions Met-1–Gly-21 are enriched in polar residues. 2 disordered regions span residues Met-1–Gly-89 and Glu-107–Thr-158. Composition is skewed to basic and acidic residues over residues His-51 to Gly-68 and Glu-107 to Arg-127. The segment covering Gln-128–Met-137 has biased composition (polar residues). Residues Glu-149 to Thr-158 show a composition bias toward basic and acidic residues.

This is an uncharacterized protein from Encephalitozoon cuniculi (strain GB-M1) (Microsporidian parasite).